The sequence spans 216 residues: Uracil-DNA glycosylase (216 aa).

Catalysis depends on Asp-59, which acts as the Proton acceptor.

It belongs to the uracil-DNA glycosylase (UDG) superfamily. UNG family.

It is found in the cytoplasm. The catalysed reaction is Hydrolyzes single-stranded DNA or mismatched double-stranded DNA and polynucleotides, releasing free uracil.. Functionally, excises uracil residues from the DNA which can arise as a result of misincorporation of dUMP residues by DNA polymerase or due to deamination of cytosine. This chain is Uracil-DNA glycosylase, found in Staphylococcus epidermidis (strain ATCC 12228 / FDA PCI 1200).